The following is a 577-amino-acid chain: Cryptochrome DASH, chloroplastic/mitochondrial (577 aa).

A chloroplast and mitochondrion-targeting transit peptide spans 1-53 (MIKQPFLLTKFTPFSSKSKHTLFTFHCNFSIKMASLTARTTPTVQNVPGLTPE). One can recognise a Photolyase/cryptochrome alpha/beta domain in the interval 78–219 (GVAIVWFRND…GNDPGSGNTT (142 aa)). Residues 550 to 577 (TKKTGDSKTAFSSRRGRPEDNRRKRHGY) are disordered.

It belongs to the DNA photolyase class-1 family. It depends on FAD as a cofactor. (6R)-5,10-methylene-5,6,7,8-tetrahydrofolate serves as cofactor. As to expression, expressed in the endosperm and embryo 96 hours after seed imbibition. In the embryo, detected in the root meristem, the root cap, the shoot apical meristem and the epidermis of cotyledons. In adult plants, detcted in roots, the whole leaf lamina, the stem and in glandular trichomes.

It is found in the plastid. It localises to the chloroplast. Its subcellular location is the mitochondrion. Its function is as follows. May have a photoreceptor function and might bind ss- and ds-DNA in a sequence non-specific manner. Lacks photolyase activity. Has a potential role in detecting the dawn and dusk transitions and, consequently, in circadian input pathways. This chain is Cryptochrome DASH, chloroplastic/mitochondrial, found in Solanum lycopersicum (Tomato).